We begin with the raw amino-acid sequence, 291 residues long: Foldase protein PrsA 2 (291 aa).

An N-terminal signal peptide occupies residues 1–20 (MKKKLILGLVMMMALFSLAA). A lipid anchor (N-palmitoyl cysteine) is attached at C21. C21 is lipidated: S-diacylglycerol cysteine. A PpiC domain is found at 135 to 226 (QPDITVSHIL…YGYHIIQMDK (92 aa)).

This sequence belongs to the PrsA family.

The protein resides in the cell membrane. The enzyme catalyses [protein]-peptidylproline (omega=180) = [protein]-peptidylproline (omega=0). In terms of biological role, plays a major role in protein secretion by helping the post-translocational extracellular folding of several secreted proteins. This Listeria innocua serovar 6a (strain ATCC BAA-680 / CLIP 11262) protein is Foldase protein PrsA 2 (prsA2).